A 118-amino-acid polypeptide reads, in one-letter code: MPRVKGGTVTRKRRKKMIKLAKGYYGSKHTLFKVANQQVMKSLLYAFRDRRQKKRDFRKLWITRINAAARMNGLSYSRLMHGLKLAGIEVNRKMLADLAVHDEKAFAELATVAKNNLK.

It belongs to the bacterial ribosomal protein bL20 family.

Its function is as follows. Binds directly to 23S ribosomal RNA and is necessary for the in vitro assembly process of the 50S ribosomal subunit. It is not involved in the protein synthesizing functions of that subunit. This Bacillus cytotoxicus (strain DSM 22905 / CIP 110041 / 391-98 / NVH 391-98) protein is Large ribosomal subunit protein bL20.